The primary structure comprises 227 residues: Ribonuclease HII (227 aa).

The RNase H type-2 domain maps to Met1 to Lys210. 3 residues coordinate a divalent metal cation: Asp7, Glu8, and Asp105.

Belongs to the RNase HII family. It depends on Mn(2+) as a cofactor. Mg(2+) is required as a cofactor.

It is found in the cytoplasm. It catalyses the reaction Endonucleolytic cleavage to 5'-phosphomonoester.. Functionally, endonuclease that specifically degrades the RNA of RNA-DNA hybrids. This chain is Ribonuclease HII, found in Thermococcus onnurineus (strain NA1).